Consider the following 242-residue polypeptide: Small ribosomal subunit protein uS2 (242 aa).

Belongs to the universal ribosomal protein uS2 family.

The protein is Small ribosomal subunit protein uS2 of Pseudoalteromonas translucida (strain TAC 125).